Consider the following 45-residue polypeptide: Large ribosomal subunit protein bL34 (45 aa).

This sequence belongs to the bacterial ribosomal protein bL34 family.

In Kocuria rhizophila (strain ATCC 9341 / DSM 348 / NBRC 103217 / DC2201), this protein is Large ribosomal subunit protein bL34.